Consider the following 239-residue polypeptide: Small ribosomal subunit protein uS2 (239 aa).

It belongs to the universal ribosomal protein uS2 family.

This chain is Small ribosomal subunit protein uS2, found in Synechococcus sp. (strain CC9902).